The primary structure comprises 236 residues: Ribonuclease 3 (236 aa).

Residues 13–138 (TEKVFKISGY…LIGAIYVDGG (126 aa)) enclose the RNase III domain. Residue E51 participates in Mg(2+) binding. The active site involves D55. 2 residues coordinate Mg(2+): N124 and E127. Residue E127 is part of the active site. The region spanning 164-232 (DAKTALQEWA…AKLMLEKVTK (69 aa)) is the DRBM domain.

Belongs to the ribonuclease III family. Homodimer. Mg(2+) serves as cofactor.

The protein resides in the cytoplasm. The catalysed reaction is Endonucleolytic cleavage to 5'-phosphomonoester.. Digests double-stranded RNA. Involved in the processing of primary rRNA transcript to yield the immediate precursors to the large and small rRNAs (23S and 16S). Processes some mRNAs, and tRNAs when they are encoded in the rRNA operon. Processes pre-crRNA and tracrRNA of type II CRISPR loci if present in the organism. This Anaplasma phagocytophilum (strain HZ) protein is Ribonuclease 3.